Consider the following 453-residue polypeptide: Phosphatidylserine decarboxylase proenzyme 1, mitochondrial (453 aa).

The transit peptide at Met1–Phe29 directs the protein to the mitochondrion. The Mitochondrial matrix portion of the chain corresponds to Ser30 to Pro74. The helical transmembrane segment at Gly75–Tyr93 threads the bilayer. Topologically, residues Glu94 to Glu453 are mitochondrial intermembrane. Active-site charge relay system; for autoendoproteolytic cleavage activity residues include Asp199, His296, and Ser408. Ser408 acts as the Schiff-base intermediate with substrate; via pyruvic acid; for decarboxylase activity in catalysis. Ser408 is modified (pyruvic acid (Ser); by autocatalysis).

Belongs to the phosphatidylserine decarboxylase family. PSD-B subfamily. Eukaryotic type I sub-subfamily. As to quaternary structure, heterodimer of a large membrane-associated beta subunit and a small pyruvoyl-containing alpha subunit. The cofactor is pyruvate. Is synthesized initially as an inactive proenzyme. Formation of the active enzyme involves a self-maturation process in which the active site pyruvoyl group is generated from an internal serine residue via an autocatalytic post-translational modification. Two non-identical subunits are generated from the proenzyme in this reaction, and the pyruvate is formed at the N-terminus of the alpha chain, which is derived from the carboxyl end of the proenzyme. The autoendoproteolytic cleavage occurs by a canonical serine protease mechanism, in which the side chain hydroxyl group of the serine supplies its oxygen atom to form the C-terminus of the beta chain, while the remainder of the serine residue undergoes an oxidative deamination to produce ammonia and the pyruvoyl prosthetic group on the alpha chain. During this reaction, the Ser that is part of the protease active site of the proenzyme becomes the pyruvoyl prosthetic group, which constitutes an essential element of the active site of the mature decarboxylase. As to expression, expressed in roots, leaves, stems and flowers.

The protein localises to the mitochondrion. Its subcellular location is the mitochondrion inner membrane. The catalysed reaction is a 1,2-diacyl-sn-glycero-3-phospho-L-serine + H(+) = a 1,2-diacyl-sn-glycero-3-phosphoethanolamine + CO2. It functions in the pathway phospholipid metabolism; phosphatidylethanolamine biosynthesis; phosphatidylethanolamine from CDP-diacylglycerol: step 2/2. Catalyzes the formation of phosphatidylethanolamine (PtdEtn) from phosphatidylserine (PtdSer). Plays a central role in phospholipid metabolism and in the interorganelle trafficking of phosphatidylserine. Contributes only to a minor proportion of PtdEtn production. This is Phosphatidylserine decarboxylase proenzyme 1, mitochondrial (PSD1) from Arabidopsis thaliana (Mouse-ear cress).